The primary structure comprises 334 residues: MRSKELIILADSSPDSVVEKAIKMGLKVAAVDQSVKERLKGYLDPSLIVEVSEWPSEGELTLFKIRGPEDVEILRREANERKFLIESESWKIIPLENIIAEVGGERIYAIADDLEEARSLLGVLEIGVKGVVIPIKDSAQLERALRLSEEVNPLNLREARVTEVKQVGMGDRVCVDTTSILSKGEGMLVGGSASFLFLVHSENIESPFTSPREFRVNAGAVSNYLLAPGGKTLYLSEVRAGSEVLAVSVDGRRRAVSVGRAKVERRPMVLVRASSDGEEGWTVLQLAETIPLVKPDGSTVAVTDLKPGDRVLVYVSERKARHFGTAVDEFIEER.

This sequence belongs to the archaeal-type DHQ synthase family.

It catalyses the reaction 2-amino-2,3,7-trideoxy-D-lyxo-hept-6-ulosonate + NAD(+) + H2O = 3-dehydroquinate + NH4(+) + NADH + H(+). In terms of biological role, catalyzes the oxidative deamination and cyclization of 2-amino-3,7-dideoxy-D-threo-hept-6-ulosonic acid (ADH) to yield 3-dehydroquinate (DHQ), which is fed into the canonical shikimic pathway of aromatic amino acid biosynthesis. The chain is 3-dehydroquinate synthase from Korarchaeum cryptofilum (strain OPF8).